The chain runs to 208 residues: Thymidylate kinase (208 aa).

Residue 10–17 participates in ATP binding; sequence GGEGVGKS.

This sequence belongs to the thymidylate kinase family.

The enzyme catalyses dTMP + ATP = dTDP + ADP. Its function is as follows. Phosphorylation of dTMP to form dTDP in both de novo and salvage pathways of dTTP synthesis. In Rhizorhabdus wittichii (strain DSM 6014 / CCUG 31198 / JCM 15750 / NBRC 105917 / EY 4224 / RW1) (Sphingomonas wittichii), this protein is Thymidylate kinase.